We begin with the raw amino-acid sequence, 689 residues long: Protein asunder (689 aa).

Positions 521-550 (NGARLKLSKAKDQYRLLYRELEQLIQLNAT) form a coiled coil. A disordered region spans residues 578 to 619 (GASLLRSYTESPLSPERLEPITSGSASGSSNSNSLLKASKRR). The span at 600-614 (SGSASGSSNSNSLLK) shows a compositional bias: low complexity. A Nuclear localization signal (NLS) motif is present at residues 613 to 619 (LKASKRR).

The protein belongs to the Integrator subunit 13 family. Belongs to the multiprotein complex Integrator, at least composed of IntS1, IntS2, IntS3, IntS4, omd/IntS5, IntS6, defl/IntS7, IntS8, IntS9, IntS10, IntS11, IntS12, asun/IntS13, IntS14 and IntS15. The core complex associates with protein phosphatase 2A subunits mts/PP2A and Pp2A-29B, to form the Integrator-PP2A (INTAC) complex. Post-translationally, phosphorylated.

It localises to the nucleus. The protein localises to the cytoplasm. Its subcellular location is the perinuclear region. In terms of biological role, component of the integrator complex, a multiprotein complex that terminates RNA polymerase II (Pol II) transcription in the promoter-proximal region of genes. The integrator complex provides a quality checkpoint during transcription elongation by driving premature transcription termination of transcripts that are unfavorably configured for transcriptional elongation: the complex terminates transcription by (1) catalyzing dephosphorylation of the C-terminal domain (CTD) of Pol II subunit Polr2A/Rbp1 and Spt5, and (2) degrading the exiting nascent RNA transcript via endonuclease activity. The integrator complex is also involved in the 3'-end processing of the U7 snRNA, and also the spliceosomal snRNAs U1, U2, U4 and U5. The chain is Protein asunder (asun) from Drosophila erecta (Fruit fly).